The following is a 571-amino-acid chain: E3 ubiquitin-protein ligase ipaH3 (571 aa).

The interaction with target proteins stretch occupies residues 1–260 (MSIMLPINNN…SQQTAQPDYH (260 aa)). 9 LRR repeats span residues 58–81 (INQF…LPPQ), 83–99 (TVLE…PELP), 100–119 (ASLE…PELP), 120–144 (ASLK…LLEY), 146–159 (NADN…PELP), 160–184 (TSLE…SLEA), 186–202 (DVST…PVRN), 205–229 (SEET…ILSL), and 232–260 (TCTI…PDYH). Residues 269–278 (SDGQQNTLHR) are linker. The 293-residue stretch at 279–571 (PLADAVTAWF…SENGSQLHHS (293 aa)) folds into the NEL domain. The interval 279–571 (PLADAVTAWF…SENGSQLHHS (293 aa)) is E3 ubiquitin-protein ligase catalytic domain. The Glycyl thioester intermediate role is filled by Cys-363.

It belongs to the LRR-containing bacterial E3 ligase family. In terms of processing, ubiquitinated in the presence of host E1 ubiquitin-activating enzyme, E2 ubiquitin-conjugating enzyme UBE2D3 and ubiquitin.

It is found in the secreted. The protein resides in the host cytoplasm. The enzyme catalyses S-ubiquitinyl-[E2 ubiquitin-conjugating enzyme]-L-cysteine + [acceptor protein]-L-lysine = [E2 ubiquitin-conjugating enzyme]-L-cysteine + N(6)-ubiquitinyl-[acceptor protein]-L-lysine.. In terms of biological role, effector proteins function to alter host cell physiology and promote bacterial survival in host tissues. This protein is an E3 ubiquitin ligase that interferes with host's ubiquitination pathway. Synthesizes a 'Lys-48'-linked ubiquitin chain, which requires non-covalent binding between ubiquitin and the host ubiquitin-conjugating enzyme UBE2D1. The sequence is that of E3 ubiquitin-protein ligase ipaH3 (ipaH3) from Shigella flexneri.